The primary structure comprises 438 residues: Transposon Ty2-OR2 Gag polyprotein (438 aa).

Disordered stretches follow at residues 1–88, 365–397, and 419–438; these read MESQ…YQQH, NVSR…AKAH, and SSQY…TERI. Polar residues-rich tracts occupy residues 19–39 and 49–60; these read ASVT…SASN and KVNSQEETTPGT. An RNA-binding region spans residues 295–397; sequence ENNINVSDRL…SSKPRAAKAH (103 aa). A compositionally biased stretch (low complexity) spans 369 to 381; it reads TSPNTTNTKVTTR.

As to quaternary structure, homotrimer.

The protein localises to the cytoplasm. Functionally, capsid protein (CA) is the structural component of the virus-like particle (VLP), forming the shell that encapsulates the retrotransposons dimeric RNA genome. The particles are assembled from trimer-clustered units and there are holes in the capsid shells that allow for the diffusion of macromolecules. CA also has nucleocapsid-like chaperone activity, promoting primer tRNA(i)-Met annealing to the multipartite primer-binding site (PBS), dimerization of Ty2 RNA and initiation of reverse transcription. This chain is Transposon Ty2-OR2 Gag polyprotein (TY2A-OR2), found in Saccharomyces cerevisiae (strain ATCC 204508 / S288c) (Baker's yeast).